Consider the following 276-residue polypeptide: 28 kDa ribonucleoprotein, chloroplastic (276 aa).

A chloroplast-targeting transit peptide spans 1–57; the sequence is MATNGCLISLPPFFTTTKSISSYPFLSTQLKPISLSSSLPTLLSLNKRTTQFPTFVS. RRM domains follow at residues 97–175 and 191–269; these read AKLF…KAAP and YRIY…AAEE.

The protein localises to the plastid. The protein resides in the chloroplast. Probably involved in the 3'-end processing of chloroplast mRNA's. This chain is 28 kDa ribonucleoprotein, chloroplastic, found in Nicotiana sylvestris (Wood tobacco).